A 242-amino-acid chain; its full sequence is tRNA (guanine-N(1)-)-methyltransferase (242 aa).

Residues glycine 113 and 133-138 contribute to the S-adenosyl-L-methionine site; that span reads IGDYVL.

Belongs to the RNA methyltransferase TrmD family. In terms of assembly, homodimer.

Its subcellular location is the cytoplasm. The catalysed reaction is guanosine(37) in tRNA + S-adenosyl-L-methionine = N(1)-methylguanosine(37) in tRNA + S-adenosyl-L-homocysteine + H(+). In terms of biological role, specifically methylates guanosine-37 in various tRNAs. The chain is tRNA (guanine-N(1)-)-methyltransferase from Shewanella sediminis (strain HAW-EB3).